We begin with the raw amino-acid sequence, 89 residues long: Small ribosomal subunit protein uS15 (89 aa).

This sequence belongs to the universal ribosomal protein uS15 family. In terms of assembly, part of the 30S ribosomal subunit. Forms a bridge to the 50S subunit in the 70S ribosome, contacting the 23S rRNA.

One of the primary rRNA binding proteins, it binds directly to 16S rRNA where it helps nucleate assembly of the platform of the 30S subunit by binding and bridging several RNA helices of the 16S rRNA. Its function is as follows. Forms an intersubunit bridge (bridge B4) with the 23S rRNA of the 50S subunit in the ribosome. This is Small ribosomal subunit protein uS15 from Lactobacillus delbrueckii subsp. bulgaricus (strain ATCC 11842 / DSM 20081 / BCRC 10696 / JCM 1002 / NBRC 13953 / NCIMB 11778 / NCTC 12712 / WDCM 00102 / Lb 14).